A 115-amino-acid chain; its full sequence is U3-lycotoxin-Ls1u (115 aa).

The N-terminal stretch at 1 to 20 (MKFVLLFGVLLVTLFSYSSA) is a signal peptide. Residues 21–44 (EMLDDFDQADEDELLSLIEKEEAR) constitute a propeptide that is removed on maturation. 3 disulfides stabilise this stretch: Cys-48-Cys-63, Cys-55-Cys-72, and Cys-62-Cys-87.

The protein belongs to the neurotoxin 19 (CSTX) family. 01 subfamily. As to expression, expressed by the venom gland.

It localises to the secreted. The sequence is that of U3-lycotoxin-Ls1u from Lycosa singoriensis (Wolf spider).